Reading from the N-terminus, the 452-residue chain is Probable pectate lyase 9 (452 aa).

Residues 1 to 25 (MATSSLKLTSACFVLLFIFVGCVLT) form the signal peptide. N-linked (GlcNAc...) asparagine glycosylation is found at N88, N139, N214, and N233. D250 is a binding site for Ca(2+). N-linked (GlcNAc...) asparagine glycosylation occurs at N271. Residues D274 and D278 each coordinate Ca(2+). N-linked (GlcNAc...) asparagine glycosylation is found at N281 and N305. R330 is a catalytic residue. N374 carries N-linked (GlcNAc...) asparagine glycosylation.

This sequence belongs to the polysaccharide lyase 1 family. Ca(2+) is required as a cofactor.

The catalysed reaction is Eliminative cleavage of (1-&gt;4)-alpha-D-galacturonan to give oligosaccharides with 4-deoxy-alpha-D-galact-4-enuronosyl groups at their non-reducing ends.. Its pathway is glycan metabolism; pectin degradation; 2-dehydro-3-deoxy-D-gluconate from pectin: step 2/5. The polypeptide is Probable pectate lyase 9 (Arabidopsis thaliana (Mouse-ear cress)).